The chain runs to 284 residues: Bifunctional protein FolD (284 aa).

NADP(+) contacts are provided by residues 166–168 and isoleucine 232; that span reads GAS.

This sequence belongs to the tetrahydrofolate dehydrogenase/cyclohydrolase family. In terms of assembly, homodimer.

It catalyses the reaction (6R)-5,10-methylene-5,6,7,8-tetrahydrofolate + NADP(+) = (6R)-5,10-methenyltetrahydrofolate + NADPH. The catalysed reaction is (6R)-5,10-methenyltetrahydrofolate + H2O = (6R)-10-formyltetrahydrofolate + H(+). Its pathway is one-carbon metabolism; tetrahydrofolate interconversion. In terms of biological role, catalyzes the oxidation of 5,10-methylenetetrahydrofolate to 5,10-methenyltetrahydrofolate and then the hydrolysis of 5,10-methenyltetrahydrofolate to 10-formyltetrahydrofolate. The protein is Bifunctional protein FolD of Shewanella sp. (strain ANA-3).